A 453-amino-acid polypeptide reads, in one-letter code: uncharacterized protein (453 aa).

2 disordered regions span residues 140-161 (YGES…TRPQ) and 311-332 (TTTR…SASS).

This is an uncharacterized protein from Caenorhabditis elegans.